A 334-amino-acid polypeptide reads, in one-letter code: L-lactate dehydrogenase B chain (334 aa).

The residue at position 2 (alanine 2) is an N-acetylalanine. The residue at position 7 (lysine 7) is an N6-acetyllysine. Residue 31 to 53 participates in NAD(+) binding; that stretch reads QVGMACAISILGKSLADELALVD. The residue at position 44 (serine 44) is a Phosphoserine. Lysine 58 carries the N6-acetyllysine modification. Arginine 100 is an NAD(+) binding site. Arginine 107 contacts substrate. N6-acetyllysine is present on lysine 119. Asparagine 139 serves as a coordination point for NAD(+). Residues asparagine 139 and arginine 170 each contribute to the substrate site. Histidine 194 serves as the catalytic Proton acceptor. The residue at position 240 (tyrosine 240) is a Phosphotyrosine. Threonine 249 lines the substrate pocket. Lysine 329 carries the post-translational modification N6-acetyllysine.

This sequence belongs to the LDH/MDH superfamily. LDH family. Homotetramer. Interacts with PTEN upstream reading frame protein MP31; the interaction leads to inhibition of mitochondrial lactate dehydrogenase activity, preventing conversion of lactate to pyruvate in mitochondria. In terms of tissue distribution, predominantly expressed in aerobic tissues such as cardiac muscle.

Its subcellular location is the cytoplasm. The protein resides in the mitochondrion inner membrane. The enzyme catalyses (S)-lactate + NAD(+) = pyruvate + NADH + H(+). The protein operates within fermentation; pyruvate fermentation to lactate; (S)-lactate from pyruvate: step 1/1. Interconverts simultaneously and stereospecifically pyruvate and lactate with concomitant interconversion of NADH and NAD(+). The chain is L-lactate dehydrogenase B chain (LDHB) from Homo sapiens (Human).